A 76-amino-acid polypeptide reads, in one-letter code: MKLTCMMIVAVLFLTAWTFVTAVPHSSNALENLYLKAHHEMNNPEDSELNKRCYDSGTSCNTGNQCCSGWCIFVCL.

A signal peptide spans 1–22 (MKLTCMMIVAVLFLTAWTFVTA). The propeptide occupies 23–50 (VPHSSNALENLYLKAHHEMNNPEDSELN). Intrachain disulfides connect cysteine 53–cysteine 67, cysteine 60–cysteine 71, and cysteine 66–cysteine 75.

Belongs to the conotoxin O1 superfamily. Expressed by the venom duct.

Its subcellular location is the secreted. Omega-conotoxins act at presynaptic membranes, they bind and block voltage-gated calcium channels. This Conus textile (Cloth-of-gold cone) protein is Omega-conotoxin-like TeAr94.